The sequence spans 217 residues: Adenylate kinase (217 aa).

10 to 15 (GIGKGT) lines the ATP pocket. An NMP region spans residues 30 to 59 (STGDIFRKNFKENTELGTLSKKFIAQGLLV). AMP is bound by residues Thr31, Arg36, 57-59 (LLV), 85-88 (GFPR), and Gln92. Residues 126–163 (GRRICPECGKVYHIEKIPPKNPGICDKDQKTLIQREDD) are LID. ATP is bound at residue Arg127. Zn(2+)-binding residues include Cys130 and Cys133. 136–137 (VY) is an ATP binding site. 2 residues coordinate Zn(2+): Cys150 and Asp153. Residues Arg160 and Arg171 each contribute to the AMP site. Gln199 is a binding site for ATP.

It belongs to the adenylate kinase family. In terms of assembly, monomer.

The protein localises to the cytoplasm. It carries out the reaction AMP + ATP = 2 ADP. The protein operates within purine metabolism; AMP biosynthesis via salvage pathway; AMP from ADP: step 1/1. Its function is as follows. Catalyzes the reversible transfer of the terminal phosphate group between ATP and AMP. Plays an important role in cellular energy homeostasis and in adenine nucleotide metabolism. The protein is Adenylate kinase of Aster yellows witches'-broom phytoplasma (strain AYWB).